Consider the following 275-residue polypeptide: Hydroxyethylthiazole kinase (275 aa).

M57 contacts substrate. Positions 132 and 178 each coordinate ATP. G205 contributes to the substrate binding site.

Belongs to the Thz kinase family. Mg(2+) is required as a cofactor.

The enzyme catalyses 5-(2-hydroxyethyl)-4-methylthiazole + ATP = 4-methyl-5-(2-phosphooxyethyl)-thiazole + ADP + H(+). It participates in cofactor biosynthesis; thiamine diphosphate biosynthesis; 4-methyl-5-(2-phosphoethyl)-thiazole from 5-(2-hydroxyethyl)-4-methylthiazole: step 1/1. Functionally, catalyzes the phosphorylation of the hydroxyl group of 4-methyl-5-beta-hydroxyethylthiazole (THZ). This is Hydroxyethylthiazole kinase from Clavibacter sepedonicus (Clavibacter michiganensis subsp. sepedonicus).